We begin with the raw amino-acid sequence, 429 residues long: Probable M18 family aminopeptidase 2 (429 aa).

Residues His82, His156, and His401 each contribute to the Zn(2+) site.

It belongs to the peptidase M18 family. Zn(2+) serves as cofactor.

This is Probable M18 family aminopeptidase 2 from Pseudomonas aeruginosa (strain UCBPP-PA14).